The following is a 431-amino-acid chain: Adenylosuccinate synthetase (431 aa).

Residues 13-19 (GDEGKGK) and 41-43 (GHT) each bind GTP. D14 acts as the Proton acceptor in catalysis. Positions 14 and 41 each coordinate Mg(2+). Residues 14–17 (DEGK), 39–42 (NAGH), T130, R144, Q225, T240, and R304 each bind IMP. The active-site Proton donor is H42. Residue 300–306 (AVTGRPR) coordinates substrate. GTP-binding positions include R306, 332-334 (KLD), and 415-417 (STG).

The protein belongs to the adenylosuccinate synthetase family. As to quaternary structure, homodimer. The cofactor is Mg(2+).

Its subcellular location is the cytoplasm. It catalyses the reaction IMP + L-aspartate + GTP = N(6)-(1,2-dicarboxyethyl)-AMP + GDP + phosphate + 2 H(+). Its pathway is purine metabolism; AMP biosynthesis via de novo pathway; AMP from IMP: step 1/2. Its function is as follows. Plays an important role in the de novo pathway of purine nucleotide biosynthesis. Catalyzes the first committed step in the biosynthesis of AMP from IMP. This Legionella pneumophila (strain Paris) protein is Adenylosuccinate synthetase.